Reading from the N-terminus, the 123-residue chain is Large ribosomal subunit protein uL29 (123 aa).

Belongs to the universal ribosomal protein uL29 family. As to quaternary structure, component of the large ribosomal subunit.

The protein resides in the cytoplasm. Component of the large ribosomal subunit. The ribosome is a large ribonucleoprotein complex responsible for the synthesis of proteins in the cell. The polypeptide is Large ribosomal subunit protein uL29 (rpl35) (Xenopus tropicalis (Western clawed frog)).